The following is a 447-amino-acid chain: Signal recognition particle 54 kDa protein (447 aa).

Residues 108 to 115 (GLYGMGKT), 188 to 192 (DTAGR), and 246 to 249 (TKLD) contribute to the GTP site.

This sequence belongs to the GTP-binding SRP family. SRP54 subfamily. In terms of assembly, part of the signal recognition particle protein translocation system, which is composed of SRP and FtsY. Archaeal SRP consists of a 7S RNA molecule of 300 nucleotides and two protein subunits: SRP54 and SRP19.

The protein resides in the cytoplasm. The catalysed reaction is GTP + H2O = GDP + phosphate + H(+). Involved in targeting and insertion of nascent membrane proteins into the cytoplasmic membrane. Binds to the hydrophobic signal sequence of the ribosome-nascent chain (RNC) as it emerges from the ribosomes. The SRP-RNC complex is then targeted to the cytoplasmic membrane where it interacts with the SRP receptor FtsY. This is Signal recognition particle 54 kDa protein from Methanopyrus kandleri (strain AV19 / DSM 6324 / JCM 9639 / NBRC 100938).